The following is a 271-amino-acid chain: MHAASRESMTELATTLDNTVAQSNAAVDGAQIGPELFDVVEVLDSNRDLRVALIDPAASSEKRADLADRVFGEKLNQASRSVLRSAVDKDWSNTRDFRNGLVQLGRRALFRAAEADDKLTTVESELFQLARVLEDAPQLEMLLADRQASADRRRQLLASVLYGKVTSITETLALQAISRAKQRPVEACETLSREAAQLRGYEVAHVVTAGELSDTQRSTLADKLGRIYGHKMSIHGEVDPSILGGMVIRVGDERIDGSTSGKLEKLRRAFA.

It belongs to the ATPase delta chain family. As to quaternary structure, F-type ATPases have 2 components, F(1) - the catalytic core - and F(0) - the membrane proton channel. F(1) has five subunits: alpha(3), beta(3), gamma(1), delta(1), epsilon(1). F(0) has three main subunits: a(1), b(2) and c(10-14). The alpha and beta chains form an alternating ring which encloses part of the gamma chain. F(1) is attached to F(0) by a central stalk formed by the gamma and epsilon chains, while a peripheral stalk is formed by the delta and b chains.

The protein resides in the cell membrane. Its function is as follows. F(1)F(0) ATP synthase produces ATP from ADP in the presence of a proton or sodium gradient. F-type ATPases consist of two structural domains, F(1) containing the extramembraneous catalytic core and F(0) containing the membrane proton channel, linked together by a central stalk and a peripheral stalk. During catalysis, ATP synthesis in the catalytic domain of F(1) is coupled via a rotary mechanism of the central stalk subunits to proton translocation. Functionally, this protein is part of the stalk that links CF(0) to CF(1). It either transmits conformational changes from CF(0) to CF(1) or is implicated in proton conduction. The chain is ATP synthase subunit delta from Corynebacterium kroppenstedtii (strain DSM 44385 / JCM 11950 / CIP 105744 / CCUG 35717).